Reading from the N-terminus, the 59-residue chain is UPF0337 protein PP_4561 (59 aa).

Basic and acidic residues predominate over residues 27–43 (TDNEKLRAEGKAQELKG). The tract at residues 27–59 (TDNEKLRAEGKAQELKGEAQQVKGNVKDAVKKP) is disordered.

This sequence belongs to the UPF0337 (CsbD) family.

The chain is UPF0337 protein PP_4561 from Pseudomonas putida (strain ATCC 47054 / DSM 6125 / CFBP 8728 / NCIMB 11950 / KT2440).